The primary structure comprises 172 residues: Co-chaperone protein HscB homolog (172 aa).

Residues 2 to 74 enclose the J domain; that stretch reads NYFELFGLVE…LRRAEYLLSL (73 aa).

The protein belongs to the HscB family. In terms of assembly, interacts with HscA and stimulates its ATPase activity.

In terms of biological role, co-chaperone involved in the maturation of iron-sulfur cluster-containing proteins. Seems to help targeting proteins to be folded toward HscA. The sequence is that of Co-chaperone protein HscB homolog from Aeromonas hydrophila subsp. hydrophila (strain ATCC 7966 / DSM 30187 / BCRC 13018 / CCUG 14551 / JCM 1027 / KCTC 2358 / NCIMB 9240 / NCTC 8049).